The following is a 374-amino-acid chain: MRPSRALIDLDALRHNIRLLNSIAHNARCAAVIKADAYGHGAVEIARALKGEAPKLAVACYDEAVSLREAGVTTPLLVLEGFYSSEELADSTRWCDIEWVVHDMEQLDMLSEVAPLRKAGPDSTRMQTWIKLNTGMNRLGLPLNKLAHVAEKLQQFPGLSVIGLMTHFACADELDSLLQQRQWRAFQAGMQAAGANGWSYSSANSAALLQYPETHLDWVRPGIAMYGASPMADKTGADFGLKPVMTFESRLIATRELQAGDSIGYGAAWTADAPTRMGVVAVGYGDGYPRQMQNGAPVAVCGKRTKIIGRVSMDMLTVDISHIPEARIGSEVELWGGTVSADEVAGYASTISYTLFTGMTSRVPRVYINRSEVV.

Residue K34 is the Proton acceptor; specific for D-alanine of the active site. N6-(pyridoxal phosphate)lysine is present on K34. R138 serves as a coordination point for substrate. The active-site Proton acceptor; specific for L-alanine is Y265. Position 313 (M313) interacts with substrate.

It belongs to the alanine racemase family. Pyridoxal 5'-phosphate is required as a cofactor.

It carries out the reaction L-alanine = D-alanine. The protein operates within amino-acid biosynthesis; D-alanine biosynthesis; D-alanine from L-alanine: step 1/1. In terms of biological role, catalyzes the interconversion of L-alanine and D-alanine. May also act on other amino acids. The protein is Alanine racemase (alr) of Hahella chejuensis (strain KCTC 2396).